Reading from the N-terminus, the 97-residue chain is Large ribosomal subunit protein eL30 (97 aa).

Belongs to the eukaryotic ribosomal protein eL30 family.

The protein is Large ribosomal subunit protein eL30 of Methanoregula boonei (strain DSM 21154 / JCM 14090 / 6A8).